The chain runs to 531 residues: High affinity cysteine transporter (531 aa).

Residues 1-54 (MSKVDVKIGADSISSSDEILVPSRLADVTLAFMEENDAAVPEITPEQEKKLKRK) lie on the Cytoplasmic side of the membrane. The helical transmembrane segment at 55–75 (LFLTIFTFVSAINLLLYMDKA) threads the bilayer. Topologically, residues 76–97 (TLSYDSILGFFEDTGLTQNTYN) are lumenal. A helical transmembrane segment spans residues 98-118 (TVNTLFYVGFAIGQFPGQYLA). At 119–120 (QK) the chain is on the cytoplasmic side. The chain crosses the membrane as a helical span at residues 121–141 (LPLGKFLGGLLATWTILIFLS). Residues 142–154 (CTAYNFSGVVALR) are Lumenal-facing. An N-linked (GlcNAc...) asparagine glycan is attached at Asn146. Residues 155–175 (FFLGLTESVVIPILITTMGMF) form a helical membrane-spanning segment. At 176 to 186 (FDASERAAAQP) the chain is on the cytoplasmic side. The helical transmembrane segment at 187–207 (FFFAACMGSPIPTGFIAYGVL) threads the bilayer. Over 208 to 218 (HITNPSISLWK) the chain is Lumenal. Residues 219-239 (IFTIIIGGLTFIMTVVVILWF) traverse the membrane as a helical segment. Residues 240-285 (PNNPADVKFFSIQERVWIIRRVQASTGSSIEQKVFKKSQFREAMKD) lie on the Cytoplasmic side of the membrane. A helical membrane pass occupies residues 286 to 306 (YITWLFGLFFLLQQLANNLPY). Residues 307-324 (QQNLLFEGMGGVDALGST) are Lumenal-facing. The helical transmembrane segment at 325 to 345 (LVSVAGAGFAVVCAFIATLML) threads the bilayer. Residues 346 to 352 (AKWKNIS) are Cytoplasmic-facing. Residues 353–373 (ALTAIFWTLPALVGSIAAAAL) form a helical membrane-spanning segment. Residues 374–378 (PWDNK) lie on the Lumenal side of the membrane. Residues 379–399 (IGILANICMAGQIFGIPFIIA) traverse the membrane as a helical segment. Residues 400–413 (LSWASSSASGYTKK) are Cytoplasmic-facing. A helical transmembrane segment spans residues 414 to 436 (LTRSSVSLFAMGIANIISPQIWR). Residues 437 to 447 (EKDSPRFLPAW) lie on the Lumenal side of the membrane. A helical membrane pass occupies residues 448–468 (IVQIVLSFSLAPAILLLIHFI). A coiled-coil region spans residues 469–498 (LKRRNNQRLKNYDENLQNYLDRIQLIESEN). The Cytoplasmic portion of the chain corresponds to 469 to 531 (LKRRNNQRLK…LENETFIYPL (63 aa)). 2 positions are modified to phosphoserine: Ser500 and Ser501.

This sequence belongs to the major facilitator superfamily. Allantoate permease family.

The protein resides in the cell membrane. It localises to the endoplasmic reticulum membrane. Functionally, high affinity cysteine-specific transporter. Major contributor to cysteine transport when cysteine, at low concentrations, is provided as the sole sulfur source. The sequence is that of High affinity cysteine transporter (YCT1) from Saccharomyces cerevisiae (strain ATCC 204508 / S288c) (Baker's yeast).